The primary structure comprises 189 residues: Interleukin-23 subunit alpha (189 aa).

A signal peptide spans 1 to 19; that stretch reads MLGSRAVMLLLLLPWTAQG. A disulfide bridge links C77 with C89.

This sequence belongs to the IL-6 superfamily. Heterodimer with IL12B; disulfide-linked. The heterodimer is known as interleukin IL-23. Interacts with IL23R; this interaction enables recruitment of IL12RB1. In terms of tissue distribution, secreted by activated dendritic and phagocytic cells and keratinocytes. Also expressed by dermal Langerhans cells (at protein level).

The protein localises to the secreted. Its function is as follows. Associates with IL12B to form the pro-inflammatory cytokine IL-23 that plays different roles in innate and adaptive immunity. Released by antigen-presenting cells such as dendritic cells or macrophages, binds to a heterodimeric receptor complex composed of IL12RB1 and IL23R to activate JAK2 and TYK2 which then phosphorylate the receptor to form a docking site leading to the phosphorylation of STAT3 and STAT4. This process leads to activation of several pathways including p38 MAPK or NF-kappa-B and promotes the production of pro-inflammatory cytokines such as interleukin-17A/IL17A. In turn, participates in the early and effective intracellular bacterial clearance. Promotes the expansion and survival of T-helper 17 cells, a CD4-positive helper T-cell subset that produces IL-17, as well as other IL-17-producing cells. The chain is Interleukin-23 subunit alpha (IL23A) from Homo sapiens (Human).